An 89-amino-acid chain; its full sequence is Prostaglandin E2 receptor EP3 subtype (89 aa).

A helical transmembrane segment spans residues 1–18; the sequence is GVWLAVLAFALLPVLGVG. Over 19–48 the chain is Extracellular; it reads QYTIQWPGTWCFISTGPGGNGTNSRQNWGN. An N-linked (GlcNAc...) asparagine glycan is attached at N38. The chain crosses the membrane as a helical span at residues 49–74; it reads VFFASDFAILGLSALVVTFACNLATI. Over 75–89 the chain is Cytoplasmic; the sequence is KALVSRCRAKATASQ.

Belongs to the G-protein coupled receptor 1 family. Interacts (via C-terminus) with MKLN1.

It localises to the cell membrane. Receptor for prostaglandin E2 (PGE2). Required for normal development of fever in response to pyrinogens, including IL1B, prostaglandin E2 and bacterial lipopolysaccharide (LPS). Required for normal potentiation of platelet aggregation by prostaglandin E2, and thus plays a role in the regulation of blood coagulation. Required for increased HCO3(-) secretion in the duodenum in response to mucosal acidification, and thereby contributes to the protection of the mucosa against acid-induced ulceration. Not required for normal kidney function, normal urine volume and osmolality. The sequence is that of Prostaglandin E2 receptor EP3 subtype (PTGER3) from Ovis aries (Sheep).